The primary structure comprises 252 residues: Trans-aconitate 2-methyltransferase (252 aa).

It belongs to the methyltransferase superfamily. Tam family.

The protein resides in the cytoplasm. The catalysed reaction is trans-aconitate + S-adenosyl-L-methionine = (E)-3-(methoxycarbonyl)pent-2-enedioate + S-adenosyl-L-homocysteine. In terms of biological role, catalyzes the S-adenosylmethionine monomethyl esterification of trans-aconitate. This is Trans-aconitate 2-methyltransferase from Escherichia coli O7:K1 (strain IAI39 / ExPEC).